Consider the following 258-residue polypeptide: Phosphoribosylaminoimidazole-succinocarboxamide synthase (258 aa).

Belongs to the SAICAR synthetase family.

It carries out the reaction 5-amino-1-(5-phospho-D-ribosyl)imidazole-4-carboxylate + L-aspartate + ATP = (2S)-2-[5-amino-1-(5-phospho-beta-D-ribosyl)imidazole-4-carboxamido]succinate + ADP + phosphate + 2 H(+). It functions in the pathway purine metabolism; IMP biosynthesis via de novo pathway; 5-amino-1-(5-phospho-D-ribosyl)imidazole-4-carboxamide from 5-amino-1-(5-phospho-D-ribosyl)imidazole-4-carboxylate: step 1/2. This Maricaulis maris (strain MCS10) (Caulobacter maris) protein is Phosphoribosylaminoimidazole-succinocarboxamide synthase.